A 546-amino-acid polypeptide reads, in one-letter code: DNA replication factor Cdt1 (546 aa).

Positions 1-11 (MEQRRVTDFFA) are enriched in basic and acidic residues. Residues 1 to 23 (MEQRRVTDFFARRRPGPPRIAPP) carry the PIP-box K+4 motif motif. 2 disordered regions span residues 1–118 (MEQR…QDQD) and 143–165 (SAQD…PCGE). Residues 28–45 (RTPSPARPALRAPASATS) are compositionally biased toward low complexity. Threonine 29 carries the post-translational modification Phosphothreonine; by MAPK8. Position 31 is a phosphoserine (serine 31). The short motif at 68–70 (RRL) is the Cyclin-binding motif element. Serine 93 bears the Phosphoserine; by MAPK8 mark. The segment at 150–190 (SCTPEAEGRPEEPCGEKAPAYQRFHALAQPGLPGLVLPYKY) is interaction with GMNN. A compositionally biased stretch (basic and acidic residues) spans 155-164 (AEGRPEEPCG). At serine 318 the chain carries Phosphoserine; by MAPK8. Serine 380 and serine 394 each carry phosphoserine. Positions 383–415 (ALRSAAPSSPGSPRPALPATPPATPPAASPSAL) are disordered. Positions 392-410 (PGSPRPALPATPPATPPAA) are enriched in pro residues. An interaction with LRWD1 region spans residues 451–546 (LERLPELARV…AHQTRAEEGL (96 aa)).

Belongs to the Cdt1 family. In terms of assembly, interacts with GMNN; the interaction inhibits binding of the MCM complex to origins of replication. Interacts with MCM6. Interacts with CDC6; are mutually dependent on one another for loading MCM complexes onto chromatin. Interacts with PCNA. Interacts with LRWD1 during G1 phase and during mitosis. Interacts with NDC80 subunit of the NDC80 complex; leading to kinetochore localization. Interacts with GRWD1; origin binding of GRWD1 is dependent on CDT1. Interacts with KAT7. Interacts with ubiquitin-binding protein FAF1; the interaction is likely to promote CDT1 degradation. In terms of processing, two independent E3 ubiquitin ligase complexes, SCF(SKP2) and the DCX(DTL) complex, mediated CDT1 degradation in S phase. Ubiquitinated by the DCX(DTL) complex, in response to DNA damage, leading to its degradation. Ubiquitination by the DCX(DTL) complex is necessary to ensure proper cell cycle regulation and is PCNA-dependent: interacts with PCNA via its PIP-box, while the presence of the containing the 'K+4' motif in the PIP box, recruit the DCX(DTL) complex, leading to its degradation. Phosphorylation at Thr-29 by CDK2 targets CDT1 for ubiquitination by SCF(SKP2) E3 ubiquitin ligase and subsequent degradation. The interaction with GMNN protects it against ubiquitination. Deubiquitinated by USP37. Ubiquitinated and degraded by the SCF(FBXO31) complex during the G2 phase to prevent re-replication. Phosphorylation by cyclin A-dependent kinases at Thr-29 targets CDT1 for ubiquitynation by SCF(SKP2) E3 ubiquitin ligase and subsequent degradation. Phosphorylated at Thr-29 by MAPK8/JNK1, which blocks replication licensing in response to stress. Binding to GMNN is not affected by phosphorylation.

Its subcellular location is the nucleus. It is found in the chromosome. It localises to the centromere. The protein localises to the kinetochore. In terms of biological role, required for both DNA replication and mitosis. DNA replication licensing factor, required for pre-replication complex assembly. Cooperates with CDC6 and the origin recognition complex (ORC) during G1 phase of the cell cycle to promote the loading of the mini-chromosome maintenance (MCM) complex onto DNA to generate pre-replication complexes (pre-RC). Required also for mitosis by promoting stable kinetochore-microtubule attachments. Potential oncogene. The protein is DNA replication factor Cdt1 of Homo sapiens (Human).